Reading from the N-terminus, the 354-residue chain is Malate dehydrogenase 1, peroxisomal (354 aa).

Positions 6 to 14 (RIARISAHL) are peroxisomal targeting signal PTS2. Residues 49-55 (GAAGGIG) and D75 contribute to the NAD(+) site. Substrate is bound by residues R122 and R128. NAD(+) is bound by residues N135 and 158–160 (ISN). 2 residues coordinate substrate: N160 and R194. H218 serves as the catalytic Proton acceptor. M269 lines the NAD(+) pocket.

Belongs to the LDH/MDH superfamily. MDH type 1 family. As to quaternary structure, homodimer. In terms of tissue distribution, expressed in rosette leaves at low levels.

It localises to the peroxisome. The catalysed reaction is (S)-malate + NAD(+) = oxaloacetate + NADH + H(+). Functionally, catalyzes a reversible NAD-dependent dehydrogenase reaction involved in central metabolism and redox homeostasis between organelle compartments. Peroxisomal NAD-dependent malate dehydrogenase involved in fatty acid beta-oxidation. Reoxidizes NADH from the beta-oxidation and provides NAD for the conversion of fatty acyl-CoA to acetyl-CoA. Does not participate directly in the glyoxylate cycle. Required for maintenance of photosynthetic rates under photorespiratory conditions, and carbon flow during photorespiration. Supplies NADH reductant to the peroxisomal hydroxypyruvate reductase (HPR), which reduces hydroxypyruvate into glycerate in the photorespiratory cycle. The sequence is that of Malate dehydrogenase 1, peroxisomal from Arabidopsis thaliana (Mouse-ear cress).